Consider the following 890-residue polypeptide: Genome polyprotein 2 (890 aa).

In terms of domain architecture, Peptidase C6 spans 135-255 (AFNFAHGYCY…NSDLLNGIVG (121 aa)). Catalysis depends on for helper component proteinase activity residues Cys143 and His215. Residues 506–533 (FTTSGDDDSPPPPGDSPSRPPGRSPDRV) are disordered. Residues 515–528 (PPPPGDSPSRPPGR) show a composition bias toward pro residues. Residues 788–816 (ELVQRSMTKLDKEIELFQAQIDSQRRAVT) adopt a coiled-coil conformation.

The protein belongs to the bymoviruses polyprotein 2 family. In terms of processing, the viral RNA2 of bymoviruses is expressed as a single polyprotein which undergoes post-translational proteolytic processing resulting in the production of at least two individual proteins. The HC-pro cleaves its C-terminus autocatalytically (Potential).

It catalyses the reaction Hydrolyzes a Gly-|-Gly bond at its own C-terminus, commonly in the sequence -Tyr-Xaa-Val-Gly-|-Gly, in the processing of the potyviral polyprotein.. The chain is Genome polyprotein 2 from Hordeum vulgare (Barley).